The chain runs to 472 residues: Arginine biosynthesis bifunctional protein ArgJ, mitochondrial (472 aa).

Residues threonine 200, lysine 229, threonine 240, glutamate 327, asparagine 467, and threonine 472 each contribute to the substrate site. The active-site Nucleophile is threonine 240.

Belongs to the ArgJ family. As to quaternary structure, heterodimer of an alpha and a beta chain. Post-translationally, the alpha and beta chains are autoproteolytically processed from a single precursor protein within the mitochondrion.

It is found in the mitochondrion matrix. It catalyses the reaction N(2)-acetyl-L-ornithine + L-glutamate = N-acetyl-L-glutamate + L-ornithine. It carries out the reaction L-glutamate + acetyl-CoA = N-acetyl-L-glutamate + CoA + H(+). It participates in amino-acid biosynthesis; L-arginine biosynthesis; L-ornithine and N-acetyl-L-glutamate from L-glutamate and N(2)-acetyl-L-ornithine (cyclic): step 1/1. Its pathway is amino-acid biosynthesis; L-arginine biosynthesis; N(2)-acetyl-L-ornithine from L-glutamate: step 1/4. Catalyzes two activities which are involved in the cyclic version of arginine biosynthesis: the synthesis of acetylglutamate from glutamate and acetyl-CoA, and of ornithine by transacetylation between acetylornithine and glutamate. The protein is Arginine biosynthesis bifunctional protein ArgJ, mitochondrial of Talaromyces marneffei (strain ATCC 18224 / CBS 334.59 / QM 7333) (Penicillium marneffei).